Reading from the N-terminus, the 348-residue chain is Alcohol dehydrogenase 1 (348 aa).

Ser2 is modified (N-acetylserine). Cys44 is a Zn(2+) binding site. Residues His45, Thr46, and His49 each contribute to the NAD(+) site. His67, Glu68, Cys98, Cys101, Cys104, Cys112, and Cys154 together coordinate Zn(2+). The NAD(+) site is built by Gly181, Gly182, Leu183, Asp202, and Lys207. Ser213 carries the post-translational modification Phosphoserine. NAD(+) is bound at residue Phe222. Thr223 carries the phosphothreonine modification. Residues Lys226 and Lys234 each participate in a glycyl lysine isopeptide (Lys-Gly) (interchain with G-Cter in ubiquitin) cross-link. NAD(+) contacts are provided by Val269 and Met271. At Ser279 the chain carries Phosphoserine. A Glycyl lysine isopeptide (Lys-Gly) (interchain with G-Cter in ubiquitin) cross-link involves residue Lys287. NAD(+) contacts are provided by Ser294 and Val296. At Ser316 the chain carries Phosphoserine. Lys319 participates in a covalent cross-link: Glycyl lysine isopeptide (Lys-Gly) (interchain with G-Cter in ubiquitin). Residue Arg341 participates in NAD(+) binding.

Belongs to the zinc-containing alcohol dehydrogenase family. As to quaternary structure, homotetramer. Zn(2+) is required as a cofactor.

The protein resides in the cytoplasm. The enzyme catalyses a primary alcohol + NAD(+) = an aldehyde + NADH + H(+). It carries out the reaction a secondary alcohol + NAD(+) = a ketone + NADH + H(+). The catalysed reaction is ethanol + NAD(+) = acetaldehyde + NADH + H(+). It catalyses the reaction allyl alcohol + NADP(+) = acrolein + NADPH + H(+). The enzyme catalyses 1-propanol + NAD(+) = propanal + NADH + H(+). It carries out the reaction butan-1-ol + NAD(+) = butanal + NADH + H(+). The catalysed reaction is hexan-1-ol + NAD(+) = hexanal + NADH + H(+). It catalyses the reaction (R)-lactaldehyde + NAD(+) = methylglyoxal + NADH + H(+). The enzyme catalyses octan-1-ol + NAD(+) = octanal + NADH + H(+). It carries out the reaction butan-2-ol + NAD(+) = butan-2-one + NADH + H(+). The catalysed reaction is propan-2-ol + NAD(+) = acetone + NADH + H(+). It catalyses the reaction isobutanol + NAD(+) = 2-methylpropanal + NADH + H(+). Preferentially fermentative isozyme that reduces acetaldehyde to ethanol during the fermentation of glucose. Major enzyme required for the conversion of acetaldehyde to ethanol. Plays a key role in the carbohydrate metabolism through the regeneration of NAD(+) from glycolytic NADH. In the reverse reaction, preferentially catalyzes the conversion of primary unbranched alcohols to their corresponding aldehydes. Also shows activity toward secondary alcohols. Most active with ethanol, and its activity decreases as the size of the alcohol is increased. This Saccharomyces cerevisiae (strain ATCC 204508 / S288c) (Baker's yeast) protein is Alcohol dehydrogenase 1 (ADH1).